A 234-amino-acid chain; its full sequence is Adenosine 5'-phosphosulfate reductase (234 aa).

[4Fe-4S] cluster-binding residues include Cys120, Cys121, Cys203, and Cys206. The active-site Nucleophile; cysteine thiosulfonate intermediate is the Cys229.

This sequence belongs to the PAPS reductase family. CysH subfamily. [4Fe-4S] cluster serves as cofactor.

It localises to the cytoplasm. It catalyses the reaction [thioredoxin]-disulfide + sulfite + AMP + 2 H(+) = adenosine 5'-phosphosulfate + [thioredoxin]-dithiol. The protein operates within sulfur metabolism; hydrogen sulfide biosynthesis; sulfite from sulfate. In terms of biological role, catalyzes the formation of sulfite from adenosine 5'-phosphosulfate (APS) using thioredoxin as an electron donor. The sequence is that of Adenosine 5'-phosphosulfate reductase from Bacillus cytotoxicus (strain DSM 22905 / CIP 110041 / 391-98 / NVH 391-98).